Here is a 791-residue protein sequence, read N- to C-terminus: Biofilm architecture maintenance protein MbaA (791 aa).

A signal peptide spans 1–23; sequence MKLNHRILLLIAPVILLSAAASS. Topologically, residues 24 to 259 are periplasmic; sequence YIIYTSQKNA…NAQLHSIQRE (236 aa). The chain crosses the membrane as a helical span at residues 260–280; the sequence is LLLSFGVSALVTVLMLLLLLY. The HAMP domain maps to 281–333; that stretch reads RHVINPILHLDKQLEEVENNQRKNIEKLNTDDEIGRLSSRFYAMYSELHSTYQ. Topologically, residues 281-791 are cytoplasmic; sequence RHVINPILHL…FTEPSQSECR (511 aa). A GGDEF domain is found at 368–509; sequence QHIWVMYIDL…GKNQVAYYSQ (142 aa). An EAL domain is found at 518 to 769; sequence RNNIERALRL…EISPWLHASN (252 aa).

Its subcellular location is the cell inner membrane. Its function is as follows. Plays an essential role in the maintenance and the formation of the three-dimensional structure of the biofilms at the later stages of their development. Absence of mbaA promotes the accumulation of larger amount of biomass on the surfaces at later stage of development, results in the overproduction of an extracellular polymeric substance that accumulates in the matrix of biofilms. This yields biofilms lacking the typical structure consisting of pillars of cells separated by fluid filled channels. In Vibrio cholerae serotype O1 (strain ATCC 39315 / El Tor Inaba N16961), this protein is Biofilm architecture maintenance protein MbaA (mbaA).